A 367-amino-acid chain; its full sequence is MKKKKEYRIAVLPGDGIGPEVMQEAYKILNVINKKFDFNIYTNEYDIGGIAIDKYGAPLPKKTLNGCIESHAILFGSIGGKEWTHLPADEQPERGGLLPLRKFFNLFVNLRPIKLHFSLKKLSPLKKEIIQDGFDILCVRELIGGIYFGLPKGKNTFDKKNISAFDTEIYSTKEIEKIADIAFQLSLKRKKKVFSIDKANVLESSMLWREVVIQVSKRYPNVELIHLYIDNAAMQLIKNPNQFDVILCSNLFGDILSDECAALTGSLGMLPSASLNESFFGLFEPAGGSAPDLKGKNIANPIAQILSLALLFKYSLQLEKISHLIELSVLKTLEKGYRTLDISNGKKYITTDQMGNYIAKTLSELIN.

An NAD(+)-binding site is contributed by 80–93; the sequence is GKEWTHLPADEQPE. Substrate-binding residues include Arg101, Arg111, Arg140, and Asp230. Mg(2+) is bound by residues Asp230, Asp254, and Asp258. 288-300 lines the NAD(+) pocket; the sequence is GSAPDLKGKNIAN.

Belongs to the isocitrate and isopropylmalate dehydrogenases family. LeuB type 1 subfamily. In terms of assembly, homodimer. Mg(2+) serves as cofactor. The cofactor is Mn(2+).

The protein resides in the cytoplasm. The catalysed reaction is (2R,3S)-3-isopropylmalate + NAD(+) = 4-methyl-2-oxopentanoate + CO2 + NADH. It functions in the pathway amino-acid biosynthesis; L-leucine biosynthesis; L-leucine from 3-methyl-2-oxobutanoate: step 3/4. Catalyzes the oxidation of 3-carboxy-2-hydroxy-4-methylpentanoate (3-isopropylmalate) to 3-carboxy-4-methyl-2-oxopentanoate. The product decarboxylates to 4-methyl-2 oxopentanoate. In Buchnera aphidicola subsp. Cinara cedri (strain Cc), this protein is 3-isopropylmalate dehydrogenase (leuB).